Consider the following 440-residue polypeptide: Thymidine phosphorylase (440 aa).

It belongs to the thymidine/pyrimidine-nucleoside phosphorylase family. In terms of assembly, homodimer.

The catalysed reaction is thymidine + phosphate = 2-deoxy-alpha-D-ribose 1-phosphate + thymine. Its pathway is pyrimidine metabolism; dTMP biosynthesis via salvage pathway; dTMP from thymine: step 1/2. Its function is as follows. The enzymes which catalyze the reversible phosphorolysis of pyrimidine nucleosides are involved in the degradation of these compounds and in their utilization as carbon and energy sources, or in the rescue of pyrimidine bases for nucleotide synthesis. In Burkholderia pseudomallei (strain 1106a), this protein is Thymidine phosphorylase.